The primary structure comprises 457 residues: Adenylosuccinate synthetase isozyme 2 A (457 aa).

GTP-binding positions include 40-46 (GDEGKGK) and 68-70 (GHT). D41 acts as the Proton acceptor in catalysis. Mg(2+)-binding residues include D41 and G68. Substrate is bound at residue D41. IMP-binding positions include 41–44 (DEGK), 66–69 (NAGH), T163, R177, N256, T271, and R335. H69 functions as the Proton donor in the catalytic mechanism. Position 331–337 (331–337 (VTTGRKR)) interacts with substrate. Residues R337, 363–365 (KLD), and 445–448 (GVGK) each bind GTP.

Belongs to the adenylosuccinate synthetase family. As to quaternary structure, homodimer. Mg(2+) serves as cofactor.

The protein localises to the cytoplasm. It is found in the mitochondrion. It catalyses the reaction IMP + L-aspartate + GTP = N(6)-(1,2-dicarboxyethyl)-AMP + GDP + phosphate + 2 H(+). It participates in purine metabolism; AMP biosynthesis via de novo pathway; AMP from IMP: step 1/2. Inhibited competitively by AMP and IMP and non-competitively by fructose 1,6-bisphosphate. Plays an important role in the de novo pathway and in the salvage pathway of purine nucleotide biosynthesis. Catalyzes the first committed step in the biosynthesis of AMP from IMP. This chain is Adenylosuccinate synthetase isozyme 2 A (adss2-a), found in Xenopus tropicalis (Western clawed frog).